The primary structure comprises 495 residues: GTPase Der (495 aa).

2 EngA-type G domains span residues 3–166 and 208–381; these read PVIA…MDAE and IKLA…DCST. GTP-binding positions include 9 to 16, 56 to 60, 118 to 121, 214 to 221, 261 to 265, and 326 to 329; these read GRPNVGKS, DTGGI, NKTD, DTAGV, and NKWD. A KH-like domain is found at 382-466; sequence KRVGTSLLTR…PIRIQFKEGE (85 aa).

The protein belongs to the TRAFAC class TrmE-Era-EngA-EngB-Septin-like GTPase superfamily. EngA (Der) GTPase family. Associates with the 50S ribosomal subunit.

GTPase that plays an essential role in the late steps of ribosome biogenesis. The chain is GTPase Der from Yersinia pseudotuberculosis serotype O:3 (strain YPIII).